We begin with the raw amino-acid sequence, 407 residues long: MRSWSAPKVPRLPGVGAPLRLFDTAAGEVGPTQPGPTARLYVCGITPYDATHLGHANTYLAFDLVNRLWRDAGHEVHFTQNATDVDDPLLERAEQTGQDWRELAEREIELFRTDMEALRILPPREYVGVTEVIDQVAELIELLRDKGATYDLDGDLYFDVAAAPKFGAVSGYSEERMLDLFGQRGGDPDRAGKKHPLDWLLWRAERPGEPSWPSPFGQGRPGWHIECTAIALANLGSGFDVAGGGSDLIFPHHECGAHEGHVACGEWPFAKAYVHAGMVALDGEKMSKSKGNLVFVSRLRKEADPMAIRLALLAHHYRSDWEWTADQLASAEVRLARWRSAVGLPAGPEAETVLAELRARMTDDLDAPGALAVVDAWADRALAGGGTDPGAPALVRDIVDALLGVEL.

Cys-43 contributes to the Zn(2+) binding site. L-cysteinyl-5'-AMP contacts are provided by residues 43–46 (CGIT), Thr-58, and 81–83 (NAT). The 'HIGH' region motif lies at 45–55 (ITPYDATHLGH). The 'ERGGDP' region signature appears at 183 to 188 (QRGGDP). Trp-223 contacts L-cysteinyl-5'-AMP. Cys-227 provides a ligand contact to Zn(2+). 245–247 (GSD) contacts L-cysteinyl-5'-AMP. His-252 is a binding site for Zn(2+). An L-cysteinyl-5'-AMP-binding site is contributed by Val-279. Positions 285 to 289 (KMSKS) match the 'KMSKS' region motif.

The protein belongs to the class-I aminoacyl-tRNA synthetase family. MshC subfamily. Monomer. Requires Zn(2+) as cofactor.

It catalyses the reaction 1D-myo-inositol 2-amino-2-deoxy-alpha-D-glucopyranoside + L-cysteine + ATP = 1D-myo-inositol 2-(L-cysteinylamino)-2-deoxy-alpha-D-glucopyranoside + AMP + diphosphate + H(+). Catalyzes the ATP-dependent condensation of GlcN-Ins and L-cysteine to form L-Cys-GlcN-Ins. In Streptosporangium roseum (strain ATCC 12428 / DSM 43021 / JCM 3005 / KCTC 9067 / NCIMB 10171 / NRRL 2505 / NI 9100), this protein is L-cysteine:1D-myo-inositol 2-amino-2-deoxy-alpha-D-glucopyranoside ligase.